Reading from the N-terminus, the 342-residue chain is Phosphate acyltransferase (342 aa).

The protein belongs to the PlsX family. As to quaternary structure, homodimer. Probably interacts with PlsY.

It is found in the cytoplasm. It carries out the reaction a fatty acyl-[ACP] + phosphate = an acyl phosphate + holo-[ACP]. It participates in lipid metabolism; phospholipid metabolism. Functionally, catalyzes the reversible formation of acyl-phosphate (acyl-PO(4)) from acyl-[acyl-carrier-protein] (acyl-ACP). This enzyme utilizes acyl-ACP as fatty acyl donor, but not acyl-CoA. This Blochmanniella pennsylvanica (strain BPEN) protein is Phosphate acyltransferase.